Reading from the N-terminus, the 380-residue chain is MTIIRKKHPLIKLINHSFIDLPTPSNISSWWNFGSLLGLCLMIQILTGLFLAMHYTSDTTTAFSSVAHICRDVNYGWLIRYMHANGASMFFICLFLHVGRGVYYGSYNMIETWNMGIVLLFAVMATAFMGYVLPWGQMSFWGATVITNLLSAIPYIGTTLVEWIWGGFSVDKATLTRFFAFHFILPFIITALVLVHLLFLHETGSNNPSGLNSDADKIPFHPYYTIKDLLGALLLLTALMILVLFFPDILGDPDNYTPANPLNTPPHIKPEWYFLFAYAILRSIPNKLGGVLALILSILILAFMPLLHTSKQRGITFRPITQTMYWILVSDLLILTWIGGQPVEYPFIMIGQVASITYFAIIVIFMPIAGIIENNILGLD.

4 helical membrane-spanning segments follow: residues 33–53, 77–98, 113–133, and 178–198; these read FGSLLGLCLMIQILTGLFLAM, WLIRYMHANGASMFFICLFLHV, WNMGIVLLFAVMATAFMGYVL, and FFAFHFILPFIITALVLVHLL. Heme b contacts are provided by histidine 83 and histidine 97. 2 residues coordinate heme b: histidine 182 and histidine 196. An a ubiquinone-binding site is contributed by histidine 201. The next 4 membrane-spanning stretches (helical) occupy residues 226–246, 288–308, 320–340, and 347–367; these read IKDLLGALLLLTALMILVLFF, LGGVLALILSILILAFMPLLH, ITQTMYWILVSDLLILTWIGG, and FIMIGQVASITYFAIIVIFMP.

It belongs to the cytochrome b family. As to quaternary structure, the cytochrome bc1 complex contains 11 subunits: 3 respiratory subunits (MT-CYB, CYC1 and UQCRFS1), 2 core proteins (UQCRC1 and UQCRC2) and 6 low-molecular weight proteins (UQCRH/QCR6, UQCRB/QCR7, UQCRQ/QCR8, UQCR10/QCR9, UQCR11/QCR10 and a cleavage product of UQCRFS1). This cytochrome bc1 complex then forms a dimer. It depends on heme b as a cofactor.

It localises to the mitochondrion inner membrane. In terms of biological role, component of the ubiquinol-cytochrome c reductase complex (complex III or cytochrome b-c1 complex) that is part of the mitochondrial respiratory chain. The b-c1 complex mediates electron transfer from ubiquinol to cytochrome c. Contributes to the generation of a proton gradient across the mitochondrial membrane that is then used for ATP synthesis. The protein is Cytochrome b (MT-CYB) of Synaptomys borealis (Northern bog lemming).